The sequence spans 702 residues: Threonine--tRNA ligase (702 aa).

Positions 1–30 (MSAPVHPVPGADGGDPLRPATPGLRSPQVP) are disordered. In terms of domain architecture, TGS spans 15–84 (DPLRPATPGL…DVDVEVTPVP (70 aa)). Residues 279–585 (DHRKLGIELD…LTEHYAGAFP (307 aa)) are catalytic. Zn(2+) contacts are provided by cysteine 384, histidine 435, and histidine 562.

This sequence belongs to the class-II aminoacyl-tRNA synthetase family. As to quaternary structure, homodimer. Requires Zn(2+) as cofactor.

It localises to the cytoplasm. It catalyses the reaction tRNA(Thr) + L-threonine + ATP = L-threonyl-tRNA(Thr) + AMP + diphosphate + H(+). Its function is as follows. Catalyzes the attachment of threonine to tRNA(Thr) in a two-step reaction: L-threonine is first activated by ATP to form Thr-AMP and then transferred to the acceptor end of tRNA(Thr). Also edits incorrectly charged L-seryl-tRNA(Thr). This chain is Threonine--tRNA ligase, found in Mycobacterium leprae (strain Br4923).